A 222-amino-acid chain; its full sequence is N-(5'-phosphoribosyl)anthranilate isomerase (222 aa).

It belongs to the TrpF family.

The catalysed reaction is N-(5-phospho-beta-D-ribosyl)anthranilate = 1-(2-carboxyphenylamino)-1-deoxy-D-ribulose 5-phosphate. It participates in amino-acid biosynthesis; L-tryptophan biosynthesis; L-tryptophan from chorismate: step 3/5. The sequence is that of N-(5'-phosphoribosyl)anthranilate isomerase from Rhizobium etli (strain ATCC 51251 / DSM 11541 / JCM 21823 / NBRC 15573 / CFN 42).